Reading from the N-terminus, the 31-residue chain is Basic phospholipase A2 13 (31 aa).

The protein belongs to the phospholipase A2 family. Group I subfamily. Requires Ca(2+) as cofactor. In terms of tissue distribution, expressed by the venom gland.

It localises to the secreted. The enzyme catalyses a 1,2-diacyl-sn-glycero-3-phosphocholine + H2O = a 1-acyl-sn-glycero-3-phosphocholine + a fatty acid + H(+). In terms of biological role, snake venom phospholipase A2 (PLA2) that inhibits neuromuscular transmission by blocking acetylcholine release from the nerve termini. PLA2 catalyzes the calcium-dependent hydrolysis of the 2-acyl groups in 3-sn-phosphoglycerides. The chain is Basic phospholipase A2 13 from Bungarus fasciatus (Banded krait).